Here is a 544-residue protein sequence, read N- to C-terminus: CRISPR-associated endodeoxyribonuclease Cas12f2 (544 aa).

A recognition domain (REC) region spans residues 1–195 (MNMSKTTISV…KPNERETRYV (195 aa)). Residues 196 to 326 (HISKLESPSK…YLQYTYEAEV (131 aa)) form a wedge domain (WED) region. Positions 327 to 334 (EANKEYAG) are linker. Positions 335-485 (CLGVDIGCSK…VYVKPDYTSQ (151 aa)) are ruvC-I. Residues D339 and E430 contribute to the active site. The tract at residues 486–520 (TCSSCGADKEKTERPSQAIFRCLNPTCRYYQRDIN) is target nucleic acid-binding (TNB). Positions 487, 490, 507, and 512 each coordinate Zn(2+). Residues 521-541 (ADFNAAVNIAKKALNNTEVVT) form a ruvC-II region. D522 is a catalytic residue.

Belongs to the CRISPR-associated endonuclease Cas12f family. As to quaternary structure, an asymmetric homodimer. Guide RNA is probably required for dimerization. It depends on Mg(2+) as a cofactor. Zn(2+) is required as a cofactor.

Functionally, CRISPR (clustered regularly interspaced short palindromic repeat), is an adaptive immune system that provides protection against mobile genetic elements (viruses, transposable elements and conjugative plasmids). CRISPR clusters contain sequences complementary to antecedent mobile elements and target invading nucleic acids. CRISPR clusters are transcribed and processed into CRISPR RNA (crRNA), which requires a trans-encoded small RNA (tracrRNA), but not this protein (in vitro). Recognizes a short motif in the CRISPR repeat sequences (the 5' PAM or protospacer adjacent motif, TTAT in this organism) to help distinguish self versus nonself, as targets within the CRISPR locus do not have PAMs. Upon expression in E.coli of this protein, a mini CRISPR array and the probable tracrRNA, has dsDNA endonuclease activity. DNA cleavage is centered around positions 21 base pairs 3' of PAM. The mini system does not protect E.coli against transformation by foreign plasmids. This Micrarchaeota archaeon (strain CG1_02_47_40) protein is CRISPR-associated endodeoxyribonuclease Cas12f2.